The primary structure comprises 772 residues: NAD(P)H-quinone oxidoreductase subunit 5, chloroplastic (772 aa).

15 helical membrane passes run 8–28 (IWIV…GLFF), 39–59 (ICAI…FSIF), 87–107 (FLID…GILV), 120–140 (GYVR…GLVL), 147–167 (IYIF…FWFS), 185–205 (GDFG…SFDI), 219–239 (NGVN…GPAA), 258–278 (TPIS…FFVA), 291–311 (MNII…IALA), 395–415 (GTTF…ACFW), 425–445 (WIAS…TGFY), 574–594 (LFSL…GVPF), 631–651 (IPSV…YGPV), 710–730 (WIID…GEGM), and 738–758 (IPSY…ILII).

Belongs to the complex I subunit 5 family. In terms of assembly, NDH is composed of at least 16 different subunits, 5 of which are encoded in the nucleus.

Its subcellular location is the plastid. It is found in the chloroplast thylakoid membrane. The enzyme catalyses a plastoquinone + NADH + (n+1) H(+)(in) = a plastoquinol + NAD(+) + n H(+)(out). It catalyses the reaction a plastoquinone + NADPH + (n+1) H(+)(in) = a plastoquinol + NADP(+) + n H(+)(out). NDH shuttles electrons from NAD(P)H:plastoquinone, via FMN and iron-sulfur (Fe-S) centers, to quinones in the photosynthetic chain and possibly in a chloroplast respiratory chain. The immediate electron acceptor for the enzyme in this species is believed to be plastoquinone. Couples the redox reaction to proton translocation, and thus conserves the redox energy in a proton gradient. This Angiopteris evecta (Mule's foot fern) protein is NAD(P)H-quinone oxidoreductase subunit 5, chloroplastic (ndhF).